The following is a 691-amino-acid chain: Elongation factor G (691 aa).

Residues 8 to 282 (NKTRNIGIMA…AVVEFLPAPV (275 aa)) enclose the tr-type G domain. Residues 17 to 24 (AHIDAGKT), 81 to 85 (DTPGH), and 135 to 138 (NKMD) each bind GTP.

This sequence belongs to the TRAFAC class translation factor GTPase superfamily. Classic translation factor GTPase family. EF-G/EF-2 subfamily.

It localises to the cytoplasm. Its function is as follows. Catalyzes the GTP-dependent ribosomal translocation step during translation elongation. During this step, the ribosome changes from the pre-translocational (PRE) to the post-translocational (POST) state as the newly formed A-site-bound peptidyl-tRNA and P-site-bound deacylated tRNA move to the P and E sites, respectively. Catalyzes the coordinated movement of the two tRNA molecules, the mRNA and conformational changes in the ribosome. This Heliobacterium modesticaldum (strain ATCC 51547 / Ice1) protein is Elongation factor G.